The following is a 629-amino-acid chain: Dapper homolog 3 (629 aa).

S6 is subject to Phosphoserine. Disordered stretches follow at residues 50-76 (PGMG…RRAA) and 105-574 (GGLE…GGLV). Positions 56–69 (EAEDEEDADEDEDA) are enriched in acidic residues. A coiled-coil region spans residues 63 to 87 (ADEDEDAAAARRAAAALEEQLEALP). Over residues 105 to 150 (GGLEQESGRSSGFYEDPSSTGGPDSPPSTFCGDSGFSGSSSYGRLG) the composition is skewed to low complexity. 2 positions are modified to phosphoserine: S165 and S239. Position 258 is an omega-N-methylarginine (R258). Positions 301–311 (PAREPSLERVG) are enriched in basic and acidic residues. Positions 316 to 335 (SPAALSRAWASSWESEAAPE) are enriched in low complexity. Pro residues predominate over residues 336-348 (PAAPPAAPSPPDS). S426 and S478 each carry phosphoserine. Positions 525–535 (SAGRLGPLGRR) are enriched in low complexity. A compositionally biased stretch (gly residues) spans 536–546 (GPAGGVGGGYG). The span at 547-568 (ESESSASEGESPAFSSASSDSD) shows a compositional bias: low complexity. The PDZ-binding motif lies at 626-629 (MTTV).

Belongs to the dapper family. Can form homodimers and heterodimers with DACT1 or DACT3. Interacts with CSNK1D, PKA catalytic subunit, PKC-type kinase, DVL1, DVL3, VANGL1, VANGL2 and CTNND1. Interacts with DVL2.

May be involved in regulation of intracellular signaling pathways during development. Specifically thought to play a role in canonical and/or non-canonical Wnt signaling pathways through interaction with DSH (Dishevelled) family proteins. This chain is Dapper homolog 3 (DACT3), found in Homo sapiens (Human).